A 202-amino-acid polypeptide reads, in one-letter code: Zinc metalloproteinase barnettlysin-1 (202 aa).

Positions 6–200 (RYVELFIVVD…MKENPQCILN (195 aa)) constitute a Peptidase M12B domain. Positions 9 and 93 each coordinate Ca(2+). 3 cysteine pairs are disulfide-bonded: C117–C197, C157–C181, and C159–C164. Position 142 (H142) interacts with Zn(2+). Residue E143 is part of the active site. Zn(2+)-binding residues include H146 and H152. Ca(2+)-binding residues include C197 and N200.

As to quaternary structure, monomer. It depends on Zn(2+) as a cofactor. In terms of tissue distribution, expressed by the venom gland.

It localises to the secreted. Its function is as follows. Non-hemorrhagic metalloproteinase that hydrolyzes the alpha chains of fibrinogen and fibrin but has no activity on beta- and gamma-chains. Cleaves X-Leu bonds. Inhibits platelet aggregation induced by the von Willebrand factor (VWF) (IC(50) is 1.4 uM) and type I collagen (IC(50) is 3.2 uM). Acts by cleaving the vWF and its receptor GPIb, and by cleaving the collagen-binding Alpha-2A domain of the collagen receptor alpha-2/beta-1 integrin (ITGA2/ITGB1). Also degrades the extracellular matrix protein fibronectin (FN1), but has no effect on laminin and type I collagen. This Bothrops barnetti (Barnett's lancehead) protein is Zinc metalloproteinase barnettlysin-1.